The sequence spans 160 residues: Large ribosomal subunit protein eL21 (160 aa).

Belongs to the eukaryotic ribosomal protein eL21 family.

The sequence is that of Large ribosomal subunit protein eL21 (rpl21) from Dictyostelium discoideum (Social amoeba).